The sequence spans 200 residues: Probable GTP-binding protein EngB (200 aa).

The EngB-type G domain maps to 23-197 (KNSEVVFIGR…RERVLKDVLG (175 aa)). Residues 31–38 (GRSNVGKS), 58–62 (GKTQL), 83–86 (DLPG), 153–156 (TKMD), and 175–177 (FTA) each bind GTP. The Mg(2+) site is built by S38 and T60.

It belongs to the TRAFAC class TrmE-Era-EngA-EngB-Septin-like GTPase superfamily. EngB GTPase family. Mg(2+) is required as a cofactor.

In terms of biological role, necessary for normal cell division and for the maintenance of normal septation. The polypeptide is Probable GTP-binding protein EngB (Wolinella succinogenes (strain ATCC 29543 / DSM 1740 / CCUG 13145 / JCM 31913 / LMG 7466 / NCTC 11488 / FDC 602W) (Vibrio succinogenes)).